The chain runs to 692 residues: Paramyosin (692 aa).

A nonhelical region region spans residues 1–15 (MNKKRDSELAKLRKL). Positions 16–692 (LEDVHIESEE…DHRVKELLLQ (677 aa)) form a coiled coil. Residues 26–57 (TAHHLRQKHQAAIQEMQDQLDQLQKAKNKSDK) are disordered.

Belongs to the paramyosin family. Homodimer.

Its subcellular location is the cytoplasm. It localises to the myofibril. Paramyosin is a major structural component of many thick filaments isolated from invertebrate muscles. This is Paramyosin from Dermatophagoides farinae (American house dust mite).